The primary structure comprises 459 residues: DnaJ protein homolog XDJ1 (459 aa).

Residues glycine 7–aspartate 79 enclose the J domain. A CR-type zinc finger spans residues glycine 146–lysine 240. CXXCXGXG motif repeat units follow at residues cysteine 159 to glycine 166, cysteine 181 to glycine 188, cysteine 208 to glycine 215, and cysteine 228 to glycine 235.

The protein localises to the mitochondrion outer membrane. The protein is DnaJ protein homolog XDJ1 (XDJ1) of Saccharomyces cerevisiae (strain ATCC 204508 / S288c) (Baker's yeast).